The chain runs to 473 residues: MSKNIGKIVQVIGAVVDVEFSDGNLPNIFTALEIKNPNNTDAPELICEVAQHLGDNVVRTIAMDATEGLVRGMDAVDTGQPIMVPVGKPSVGRILNVIGRPVDEMGPINAEKYYPIHRPAPAFTDQNTKVELLETGIKVVDLLVPFPKGGKMGLFGGAGVGKTVILMEMINNIAKQHGGSSVFAGVGERTREGNDLYHELKDAGVLERATLVYGQMNEPPGARARVALTALACAEYFRDEEHQDVLLFIDNIFRFTQAGSEVSALLGRMPSAVGYQPTLGTDLGSLQERITSTNTGSITSVQAVYVPADDLTDPAPATTFSHLDGTLVLSRQIAELGIYPAVDPLDSTSRILDPNVVGEEHYAVARRVQMVLQKYKELQDIIAILGMDELSDEDKLTVARARRIQRFLSQPFHVAETFTGTPGQYVNLEDTIKGFKGILDGAYDHMAEGDFYMLGGIEQAVAKYEQRKLQEEN.

156–163 (GGAGVGKT) contacts ATP.

This sequence belongs to the ATPase alpha/beta chains family. In terms of assembly, F-type ATPases have 2 components, CF(1) - the catalytic core - and CF(0) - the membrane proton channel. CF(1) has five subunits: alpha(3), beta(3), gamma(1), delta(1), epsilon(1). CF(0) has three main subunits: a(1), b(2) and c(9-12). The alpha and beta chains form an alternating ring which encloses part of the gamma chain. CF(1) is attached to CF(0) by a central stalk formed by the gamma and epsilon chains, while a peripheral stalk is formed by the delta and b chains.

The protein localises to the cell inner membrane. It catalyses the reaction ATP + H2O + 4 H(+)(in) = ADP + phosphate + 5 H(+)(out). Functionally, produces ATP from ADP in the presence of a proton gradient across the membrane. The catalytic sites are hosted primarily by the beta subunits. The polypeptide is ATP synthase subunit beta (Desulfovibrio desulfuricans (strain ATCC 27774 / DSM 6949 / MB)).